Consider the following 506-residue polypeptide: Maturase K (506 aa).

It belongs to the intron maturase 2 family. MatK subfamily.

The protein localises to the plastid. It localises to the chloroplast. Usually encoded in the trnK tRNA gene intron. Probably assists in splicing its own and other chloroplast group II introns. The protein is Maturase K of Prunus dulcis (Almond).